The sequence spans 105 residues: Probable tetrachloroethene reductive dehalogenase membrane anchor protein (105 aa).

Helical transmembrane passes span 3–23, 35–55, and 66–86; these read IYDVLIWMALGMTALLIQYGI, IPLQICGFLANFFFIFALAWG, and AIGMGFIFFGGTALIPAIITY.

Belongs to the PceB family.

It is found in the cell membrane. Functionally, may act as a membrane anchor for the tetrachloroethene reductive dehalogenase PceA. This chain is Probable tetrachloroethene reductive dehalogenase membrane anchor protein, found in Desulfitobacterium hafniense (Desulfitobacterium frappieri).